Reading from the N-terminus, the 255-residue chain is Pre-miRNA 5'-monophosphate methyltransferase (255 aa).

Residues R32, N66, D96, 121–122, and M150 contribute to the S-adenosyl-L-methionine site; that span reads DI. Residues 41-253 form the Bin3-type SAM domain; sequence LHKLFRKPAE…SLLLFKIQRH (213 aa).

This sequence belongs to the methyltransferase superfamily.

It is found in the cytoplasm. It catalyses the reaction a 5'-end 5'-phospho-ribonucleoside-RNA + S-adenosyl-L-methionine = a 5'-end (5'-methylphospho)-ribonucleoside-RNA + S-adenosyl-L-homocysteine. The catalysed reaction is a 5'-end 5'-phospho-ribonucleoside-RNA + 2 S-adenosyl-L-methionine = a 5'-end (5'-bismethylphospho)-ribonucleoside-RNA + 2 S-adenosyl-L-homocysteine. In terms of biological role, O-methyltransferase that specifically monomethylates 5'-monophosphate of cytoplasmic histidyl tRNA (tRNA(His)), acting as a capping enzyme by protecting tRNA(His) from cleavage by DICER1. Also able, with less efficiently, to methylate the 5' monophosphate of a subset of pre-miRNAs, acting as a negative regulator of miRNA processing. The 5' monophosphate of pre-miRNAs is recognized by DICER1 and is required for pre-miRNAs processing: methylation at this position reduces the processing of pre-miRNAs by DICER1. Was also reported to mediate dimethylation of pre-miR-145; however dimethylation cannot be reproduced by another group which observes a monomethylation of pre-miR-145. In Xenopus laevis (African clawed frog), this protein is Pre-miRNA 5'-monophosphate methyltransferase (bcdin3d).